A 133-amino-acid chain; its full sequence is Phosphoribosyl-AMP cyclohydrolase (133 aa).

Asp-77 is a binding site for Mg(2+). Position 78 (Cys-78) interacts with Zn(2+). Mg(2+) contacts are provided by Asp-79 and Asp-81. Positions 95 and 102 each coordinate Zn(2+).

Belongs to the PRA-CH family. As to quaternary structure, homodimer. The cofactor is Mg(2+). Requires Zn(2+) as cofactor.

The protein resides in the cytoplasm. It catalyses the reaction 1-(5-phospho-beta-D-ribosyl)-5'-AMP + H2O = 1-(5-phospho-beta-D-ribosyl)-5-[(5-phospho-beta-D-ribosylamino)methylideneamino]imidazole-4-carboxamide. It participates in amino-acid biosynthesis; L-histidine biosynthesis; L-histidine from 5-phospho-alpha-D-ribose 1-diphosphate: step 3/9. Catalyzes the hydrolysis of the adenine ring of phosphoribosyl-AMP. This chain is Phosphoribosyl-AMP cyclohydrolase, found in Azotobacter vinelandii (strain DJ / ATCC BAA-1303).